The primary structure comprises 444 residues: MQAASKAGHNVVVVGTQWGDEGKGKVVDWLTDHAAAVVRFQGGHNAGHTLVIKGKKTALQLIPSGVMRDGVACYIGNGVVVDPAHLLGEIERLEAAGVEVRSRLFISESCPLILPFHVEVDKAREALRESSGAGKIGTTGKGIGPAYEDKVARRALRVQDLKHPDRFAKKLRDLLELHNFVLQGFLKAEALEFPPIFDHAMNVAEQLKPMLADVGVRIHETNLAGGSVLFEGAQGTLLDIDHGTYPYVTSSNCVAGNAAAGSGVGPDKLHYILGITKAYTTRVGSGPFPTELPMDEPGTVGHHLSTVGQERGTVTGRPRRCGWLDAAAMKRSILINGLTGLCITKLDVLDGLTEIKMGVGYELDGRRIDILPLDADEIVACKPVYESFPGWTGSTVGTTRWDDLPLNARRYLERVQEVIGAPIDMVSTGPDREHTILLRHPYQG.

GTP is bound by residues 19-25 and 47-49; these read GDEGKGK and GHT. Asp-20 functions as the Proton acceptor in the catalytic mechanism. Residues Asp-20 and Gly-47 each contribute to the Mg(2+) site. Residues 20–23, 45–48, Thr-139, Arg-153, Gln-234, Thr-249, and Arg-317 each bind IMP; these read DEGK and NAGH. Residue His-48 is the Proton donor of the active site. Residue 313 to 319 participates in substrate binding; that stretch reads TVTGRPR. Residues Arg-319, 345 to 347, and 427 to 429 contribute to the GTP site; these read KLD and STG.

It belongs to the adenylosuccinate synthetase family. In terms of assembly, homodimer. The cofactor is Mg(2+).

The protein resides in the cytoplasm. The enzyme catalyses IMP + L-aspartate + GTP = N(6)-(1,2-dicarboxyethyl)-AMP + GDP + phosphate + 2 H(+). It participates in purine metabolism; AMP biosynthesis via de novo pathway; AMP from IMP: step 1/2. Plays an important role in the de novo pathway of purine nucleotide biosynthesis. Catalyzes the first committed step in the biosynthesis of AMP from IMP. This Methylibium petroleiphilum (strain ATCC BAA-1232 / LMG 22953 / PM1) protein is Adenylosuccinate synthetase.